Reading from the N-terminus, the 932-residue chain is Isoleucine--tRNA ligase (932 aa).

Residues 58–68 (PYANGDIHIGH) carry the 'HIGH' region motif. Position 570 (glutamate 570) interacts with L-isoleucyl-5'-AMP. Residues 611 to 615 (KMSKS) carry the 'KMSKS' region motif. Residue lysine 614 participates in ATP binding. The Zn(2+) site is built by cysteine 895, cysteine 898, cysteine 915, and cysteine 918.

This sequence belongs to the class-I aminoacyl-tRNA synthetase family. IleS type 1 subfamily. As to quaternary structure, monomer. Zn(2+) serves as cofactor.

It localises to the cytoplasm. It carries out the reaction tRNA(Ile) + L-isoleucine + ATP = L-isoleucyl-tRNA(Ile) + AMP + diphosphate. Its function is as follows. Catalyzes the attachment of isoleucine to tRNA(Ile). As IleRS can inadvertently accommodate and process structurally similar amino acids such as valine, to avoid such errors it has two additional distinct tRNA(Ile)-dependent editing activities. One activity is designated as 'pretransfer' editing and involves the hydrolysis of activated Val-AMP. The other activity is designated 'posttransfer' editing and involves deacylation of mischarged Val-tRNA(Ile). The chain is Isoleucine--tRNA ligase from Dechloromonas aromatica (strain RCB).